The chain runs to 711 residues: Ribosomal RNA large subunit methyltransferase K/L (711 aa).

The THUMP domain maps to 43-154 (LAYRITLWTR…NGVITIAMNF (112 aa)).

It belongs to the methyltransferase superfamily. RlmKL family.

The protein resides in the cytoplasm. The enzyme catalyses guanosine(2445) in 23S rRNA + S-adenosyl-L-methionine = N(2)-methylguanosine(2445) in 23S rRNA + S-adenosyl-L-homocysteine + H(+). The catalysed reaction is guanosine(2069) in 23S rRNA + S-adenosyl-L-methionine = N(2)-methylguanosine(2069) in 23S rRNA + S-adenosyl-L-homocysteine + H(+). Functionally, specifically methylates the guanine in position 2445 (m2G2445) and the guanine in position 2069 (m7G2069) of 23S rRNA. The polypeptide is Ribosomal RNA large subunit methyltransferase K/L (Shewanella oneidensis (strain ATCC 700550 / JCM 31522 / CIP 106686 / LMG 19005 / NCIMB 14063 / MR-1)).